Consider the following 778-residue polypeptide: MFIEHPLIKPKTLEARLYQQIIAANALKKKTLCVLSTGLGKTAIAILVIAGILTKKDGKVLILAPSRPLVEQHYNRLKQVLNIDEDKIIALTGKIQPKKRAELYKKGKIFIATPQVIENDIIAGRINVDEFILLIADEAHHTTGDHAYAFVAKKFKDKCHILGLTASPGSDIDKVMEICENLGIEHVEVRTEDDEDVKPYIAKVKLIPIRIDLPNEFKRALKLINEALKERLKILKDAGVINSIADVTKTELIELNNKLFSYDEEVKYELIKVCSEALKLMHAKELLESQGKSVFLNYINKLSMQRTKSAKSIVNDEKVREAVNLLMKSDVEHPKLGKVVDMVKNILEKNKDERIIIFAQYRDTVEKIVNLLTQNGIKAIRFIGQANKEGKGMSQKEQIEAIERFKKEGSVLVSTSVSEEGIDIPSVNYIIFYEPVPSEIRFIQRRGRAMRGEGGKVYVLIAKGTADEAYYRSALYKEREMKRLLKNMCYLLNKRLQKKFEEKSKEEIKEETEEIKEKEIESKTAVKEETKEEEEKTKKPVTILDFIKQIEVKERSKSEEDKIKQEIKIPKKPIKIIVDVREKNMAKLLHNYANIELKTLEVGDYVLSDRVVVERKTAEDFVNSIIDKRLFSQLKNLKKVEKPLLIVEGENFSRLHENALKGAILSIILDFGIPIIFTKNAEETADLLIKIAEKEQIKEKRTVMVRYGKTAMSLKEQQKFIVESLPDVGGALAERLLKHFKTVENVFTAKEEELMKVEGVGKERAKKIREVLTAEYEG.

A Helicase ATP-binding domain is found at 22-186 (IAANALKKKT…EICENLGIEH (165 aa)). Residue 35–42 (LSTGLGKT) coordinates ATP. Positions 137-140 (DEAH) match the DEAH box motif. Residues 338–516 (KVVDMVKNIL…EIKEETEEIK (179 aa)) enclose the Helicase C-terminal domain.

This sequence belongs to the DEAD box helicase family. DEAH subfamily.

The enzyme catalyses ATP + H2O = ADP + phosphate + H(+). The chain is Putative ATP-dependent RNA helicase MJ1505 from Methanocaldococcus jannaschii (strain ATCC 43067 / DSM 2661 / JAL-1 / JCM 10045 / NBRC 100440) (Methanococcus jannaschii).